Consider the following 106-residue polypeptide: CRISPR-associated endoribonuclease Cas2 (106 aa).

Residue Asp-8 coordinates Mg(2+). Residues 86–106 (EEAAEAAVSYPGRSRKKARAG) are disordered.

The protein belongs to the CRISPR-associated endoribonuclease Cas2 protein family. In terms of assembly, homodimer, forms a heterotetramer with a Cas1 homodimer. The cofactor is Mg(2+).

Its function is as follows. CRISPR (clustered regularly interspaced short palindromic repeat), is an adaptive immune system that provides protection against mobile genetic elements (viruses, transposable elements and conjugative plasmids). CRISPR clusters contain sequences complementary to antecedent mobile elements and target invading nucleic acids. CRISPR clusters are transcribed and processed into CRISPR RNA (crRNA). Functions as a ssRNA-specific endoribonuclease. Involved in the integration of spacer DNA into the CRISPR cassette. The sequence is that of CRISPR-associated endoribonuclease Cas2 from Desulforudis audaxviator (strain MP104C).